Consider the following 275-residue polypeptide: Intercellular adhesion molecule 2 (275 aa).

Residues M1 to E24 form the signal peptide. Over K25 to Q223 the chain is Extracellular. The 58-residue stretch at K41–K98 folds into the Ig-like C2-type 1 domain. 6 N-linked (GlcNAc...) asparagine glycosylation sites follow: N47, N82, N105, N153, N176, and N187. 2 cysteine pairs are disulfide-bonded: C48-C91 and C52-C95. In terms of domain architecture, Ig-like C2-type 2 spans G127–M197. Cysteines 134 and 190 form a disulfide. Residues M224–F248 form a helical membrane-spanning segment. The Cytoplasmic segment spans residues G249–P275. Positions H251–P275 are required for interaction with EZR, MSN and RDX and co-localization to microvilli.

This sequence belongs to the immunoglobulin superfamily. ICAM family. As to quaternary structure, interacts with RDX, EZR and MSN.

The protein resides in the membrane. Its subcellular location is the cell projection. The protein localises to the microvillus. Functionally, ICAM proteins are ligands for the leukocyte adhesion protein LFA-1 (integrin alpha-L/beta-2). ICAM2 may play a role in lymphocyte recirculation by blocking LFA-1-dependent cell adhesion. It mediates adhesive interactions important for antigen-specific immune response, NK-cell mediated clearance, lymphocyte recirculation, and other cellular interactions important for immune response and surveillance. This is Intercellular adhesion molecule 2 (ICAM2) from Pan troglodytes (Chimpanzee).